A 601-amino-acid chain; its full sequence is ATP-dependent lipid A-core flippase (601 aa).

The next 4 helical transmembrane spans lie at 26-46 (VGLFAVSILGYVIFASSQPML), 82-102 (LMIVLIAAWQGLGGYLGNYFL), 167-187 (VFLFAYLLWMNWRLTLVMVAI), and 263-283 (VYTPTLQLVTYSAMAVVLFLV). The ABC transmembrane type-1 domain maps to 30–321 (AVSILGYVIF…LSEVSSTIQR (292 aa)). One can recognise an ABC transporter domain in the interval 353–589 (IEVRDLSFRY…GGHYARLHAM (237 aa)). 387–394 (GRSGSGKS) provides a ligand contact to ATP.

It belongs to the ABC transporter superfamily. Lipid exporter (TC 3.A.1.106) family. In terms of assembly, homodimer.

It localises to the cell inner membrane. The enzyme catalyses ATP + H2O + lipid A-core oligosaccharideSide 1 = ADP + phosphate + lipid A-core oligosaccharideSide 2.. Functionally, involved in lipopolysaccharide (LPS) biosynthesis. Translocates lipid A-core from the inner to the outer leaflet of the inner membrane. Transmembrane domains (TMD) form a pore in the inner membrane and the ATP-binding domain (NBD) is responsible for energy generation. The protein is ATP-dependent lipid A-core flippase of Aromatoleum aromaticum (strain DSM 19018 / LMG 30748 / EbN1) (Azoarcus sp. (strain EbN1)).